Here is an 880-residue protein sequence, read N- to C-terminus: Valine--tRNA ligase (880 aa).

The short motif at 51–61 (PNVTGELHLGH) is the 'HIGH' region element. Positions 529 to 533 (KMSKT) match the 'KMSKS' region motif. K532 provides a ligand contact to ATP. A coiled-coil region spans residues 815-854 (MSTMVDLEVEAKRVKAEISELEIQIERLSTRLSDEQFLAK).

It belongs to the class-I aminoacyl-tRNA synthetase family. ValS type 1 subfamily. Monomer.

Its subcellular location is the cytoplasm. The enzyme catalyses tRNA(Val) + L-valine + ATP = L-valyl-tRNA(Val) + AMP + diphosphate. In terms of biological role, catalyzes the attachment of valine to tRNA(Val). As ValRS can inadvertently accommodate and process structurally similar amino acids such as threonine, to avoid such errors, it has a 'posttransfer' editing activity that hydrolyzes mischarged Thr-tRNA(Val) in a tRNA-dependent manner. This Dehalococcoides mccartyi (strain CBDB1) protein is Valine--tRNA ligase.